A 113-amino-acid chain; its full sequence is uncharacterized protein (113 aa).

Residues 78 to 113 (YCNRGSERTNQGNRGSAPSKILLPRTIADPFRGGPE) are disordered.

This is an uncharacterized protein from Halobacterium phage phiH (Bacteriophage phi-H).